The chain runs to 521 residues: MDYRRLRMPDFDAIPRRDYLMAVLSGVLLALSFPSPGISPLAWIAFAPLLLACGRKDPRKAFRLGFVTGLAAYAGILYWITIVVTTYGKLPWIVSVGVLSMLVSYLALYPAVVAYLVRRGEERGISLLISFPLLWVGLEYGRAFLVTGFPWASLGYTQYRTLPLIQIADITGVYGLSFLIALANVVLFRIIRGFAAREPAPYPVKSVVLLLVLLLVTIAYGFKRLHVPEGGAPFKVALIQGNIDQNIKWDPSFQEETVAIYERLSRKACAAGPSDLLVWPESAAPFYFQDEPRYASRIKGLARELKTCAVVGSPAFEKDGERLKYLNSAFLLSPWGDVIGRSDKIHLVPFGEYVPMAKLLPFVNKLVAGIGDFSPGAQIAALDTGKGRIGILVCFEGIFPELSRAYVRAGSRLLVNITNDAWFGRSSAPYQHISMTVFRAVENRVPLVRAANTGITSIIDSRGHIRGMTPLFQEAVLNGEVRLGEGESFYNRYGDVFAWACVAGAAVVAALAFRRKSIHHQ.

The next 6 helical transmembrane spans lie at 27–47 (VLLA…IAFA), 64–84 (LGFV…TIVV), 93–113 (IVSV…PAVV), 125–145 (ISLL…RAFL), 167–187 (IADI…NVVL), and 202–222 (YPVK…AYGF). Residues 239-483 (IQGNIDQNIK…EAVLNGEVRL (245 aa)) form the CN hydrolase domain. Glu281 (proton acceptor) is an active-site residue. Residue Lys344 is part of the active site. The active-site Nucleophile is Cys394. The chain crosses the membrane as a helical span at residues 493 to 513 (YGDVFAWACVAGAAVVAALAF).

The protein belongs to the CN hydrolase family. Apolipoprotein N-acyltransferase subfamily.

Its subcellular location is the cell inner membrane. The catalysed reaction is N-terminal S-1,2-diacyl-sn-glyceryl-L-cysteinyl-[lipoprotein] + a glycerophospholipid = N-acyl-S-1,2-diacyl-sn-glyceryl-L-cysteinyl-[lipoprotein] + a 2-acyl-sn-glycero-3-phospholipid + H(+). It participates in protein modification; lipoprotein biosynthesis (N-acyl transfer). Catalyzes the phospholipid dependent N-acylation of the N-terminal cysteine of apolipoprotein, the last step in lipoprotein maturation. This is Apolipoprotein N-acyltransferase from Geobacter metallireducens (strain ATCC 53774 / DSM 7210 / GS-15).